The sequence spans 304 residues: UTP--glucose-1-phosphate uridylyltransferase 1 (304 aa).

The protein belongs to the UDPGP type 2 family.

The enzyme catalyses alpha-D-glucose 1-phosphate + UTP + H(+) = UDP-alpha-D-glucose + diphosphate. The protein operates within carbohydrate metabolism; nucleotide-sugar metabolism. This is UTP--glucose-1-phosphate uridylyltransferase 1 (hasC1) from Streptococcus pyogenes serotype M18 (strain MGAS8232).